The primary structure comprises 317 residues: Periplasmic [NiFe] hydrogenase small subunit 1 (317 aa).

Residues 1 to 49 (MRFSVGLGKEGAEERLARRGVSRRDFLKFCTAIAVTMGMGPAFAPEVAR) constitute a signal peptide (tat-type signal). [4Fe-4S] cluster contacts are provided by cysteine 67, cysteine 70, cysteine 164, cysteine 200, histidine 238, cysteine 241, cysteine 266, and cysteine 272. The [3Fe-4S] cluster site is built by cysteine 281, cysteine 299, and cysteine 302.

Belongs to the [NiFe]/[NiFeSe] hydrogenase small subunit family. As to quaternary structure, heterodimer of a large and a small subunit. The cofactor is [3Fe-4S] cluster. It depends on [4Fe-4S] cluster as a cofactor. Post-translationally, predicted to be exported by the Tat system. The position of the signal peptide cleavage has not been experimentally proven.

It is found in the periplasm. It catalyses the reaction 2 Fe(III)-[cytochrome c3] + H2 = 2 Fe(II)-[cytochrome c3] + 2 H(+). In Nitratidesulfovibrio vulgaris (strain ATCC 29579 / DSM 644 / CCUG 34227 / NCIMB 8303 / VKM B-1760 / Hildenborough) (Desulfovibrio vulgaris), this protein is Periplasmic [NiFe] hydrogenase small subunit 1 (hynB1).